The chain runs to 72 residues: Translation initiation factor IF-1 (72 aa).

An S1-like domain is found at 1–72 (MSKEELLEFP…TKGRITYRFK (72 aa)).

The protein belongs to the IF-1 family. As to quaternary structure, component of the 30S ribosomal translation pre-initiation complex which assembles on the 30S ribosome in the order IF-2 and IF-3, IF-1 and N-formylmethionyl-tRNA(fMet); mRNA recruitment can occur at any time during PIC assembly.

Its subcellular location is the cytoplasm. Its function is as follows. One of the essential components for the initiation of protein synthesis. Stabilizes the binding of IF-2 and IF-3 on the 30S subunit to which N-formylmethionyl-tRNA(fMet) subsequently binds. Helps modulate mRNA selection, yielding the 30S pre-initiation complex (PIC). Upon addition of the 50S ribosomal subunit IF-1, IF-2 and IF-3 are released leaving the mature 70S translation initiation complex. The chain is Translation initiation factor IF-1 from Parvibaculum lavamentivorans (strain DS-1 / DSM 13023 / NCIMB 13966).